Here is a 434-residue protein sequence, read N- to C-terminus: Alpha-enolase (434 aa).

At serine 2 the chain carries N-acetylserine. At lysine 5 the chain carries N6-acetyllysine. Position 27 is a phosphoserine (serine 27). Serine 40 contacts Mg(2+). At tyrosine 44 the chain carries Phosphotyrosine. N6-acetyllysine; alternate is present on lysine 60. Lysine 60 carries the N6-succinyllysine; alternate modification. N6-acetyllysine occurs at positions 64 and 71. Position 89 is an N6-acetyllysine; alternate (lysine 89). An N6-succinyllysine; alternate modification is found at lysine 89. Lysine 92 and lysine 126 each carry N6-acetyllysine. Substrate is bound by residues histidine 158 and glutamate 167. Residues lysine 193 and lysine 199 each carry the N6-acetyllysine modification. Lysine 202 carries the N6-acetyllysine; alternate modification. Lysine 202 participates in a covalent cross-link: Glycyl lysine isopeptide (Lys-Gly) (interchain with G-Cter in SUMO2); alternate. Glutamate 210 (proton donor) is an active-site residue. N6-acetyllysine; alternate occurs at positions 228 and 233. Position 228 is an N6-succinyllysine; alternate (lysine 228). At lysine 228 the chain carries N6-(2-hydroxyisobutyryl)lysine; alternate. An N6-malonyllysine; alternate modification is found at lysine 233. Residue aspartate 245 participates in Mg(2+) binding. The residue at position 254 (serine 254) is a Phosphoserine. Lysine 256 carries the post-translational modification N6-acetyllysine. 2 positions are modified to phosphoserine: serine 263 and serine 272. Lysine 281 is subject to N6-acetyllysine; alternate. Lysine 281 is subject to N6-(2-hydroxyisobutyryl)lysine; alternate. Position 285 is an N6-acetyllysine (lysine 285). Tyrosine 287 is modified (phosphotyrosine). A Phosphoserine modification is found at serine 291. Positions 293 and 318 each coordinate Mg(2+). Glutamate 293 and aspartate 318 together coordinate substrate. Residues lysine 335 and lysine 343 each carry the N6-acetyllysine modification. Lysine 343 acts as the Proton acceptor in catalysis. Substrate contacts are provided by residues 370–373 and lysine 394; that span reads SHRS. The required for interaction with PLG stretch occupies residues 405 to 434; it reads AKYNQLLRIEEELGSKAKFAGRNFRNPLAK. Position 406 is an N6-acetyllysine (lysine 406). Residue lysine 420 is modified to N6-acetyllysine; alternate. Lysine 420 is subject to N6-succinyllysine; alternate. Lysine 420 bears the N6-malonyllysine; alternate mark.

It belongs to the enolase family. Mammalian enolase is composed of 3 isozyme subunits, alpha, beta and gamma, which can form homodimers or heterodimers which are cell-type and development-specific. ENO1 interacts with PLG in the neuronal plasma membrane and promotes its activation. The C-terminal lysine is required for this binding. Interacts with ENO4 and PGAM2. Interacts with CMTM6. Requires Mg(2+) as cofactor. In terms of processing, ISGylated. Post-translationally, lysine 2-hydroxyisobutyrylation (Khib) by p300/EP300 activates the phosphopyruvate hydratase activity.

It localises to the cytoplasm. It is found in the cell membrane. It carries out the reaction (2R)-2-phosphoglycerate = phosphoenolpyruvate + H2O. It participates in carbohydrate degradation; glycolysis; pyruvate from D-glyceraldehyde 3-phosphate: step 4/5. Glycolytic enzyme the catalyzes the conversion of 2-phosphoglycerate to phosphoenolpyruvate. In addition to glycolysis, involved in various processes such as growth control, hypoxia tolerance and allergic responses. May also function in the intravascular and pericellular fibrinolytic system due to its ability to serve as a receptor and activator of plasminogen on the cell surface of several cell-types such as leukocytes and neurons. Stimulates immunoglobulin production. The sequence is that of Alpha-enolase (ENO1) from Macaca fascicularis (Crab-eating macaque).